The primary structure comprises 397 residues: Flavohemoprotein A (397 aa).

Residues 2–137 (SLSQQSISII…IAQAFIDAEA (136 aa)) form the Globin domain. H84 is a binding site for heme b. Active-site charge relay system residues include Y94 and E136. The segment at 150–397 (WRDTREFIVD…YEIFGPLTNV (248 aa)) is reductase. An FAD-binding FR-type domain is found at 151 to 266 (RDTREFIVDR…SPPAGDYVVD (116 aa)). Residues Y189 and 208 to 211 (RHYS) each bind FAD. 279–284 (GVGITP) serves as a coordination point for NADP(+). An FAD-binding site is contributed by 390 to 393 (IFGP).

The protein belongs to the globin family. Two-domain flavohemoproteins subfamily. In the C-terminal section; belongs to the flavoprotein pyridine nucleotide cytochrome reductase family. FAD is required as a cofactor. The cofactor is heme b.

The protein localises to the cytoplasm. The catalysed reaction is 2 nitric oxide + NADPH + 2 O2 = 2 nitrate + NADP(+) + H(+). The enzyme catalyses 2 nitric oxide + NADH + 2 O2 = 2 nitrate + NAD(+) + H(+). Its function is as follows. Is involved in NO detoxification in an aerobic process, termed nitric oxide dioxygenase (NOD) reaction that utilizes O(2) and NAD(P)H to convert NO to nitrate, which protects the cell from various noxious nitrogen compounds. Therefore, plays a central role in the inducible response to nitrosative stress. In terms of biological role, in the presence of oxygen and NADH, it has NADH oxidase activity, which leads to the generation of superoxide and H(2)O(2). Under anaerobic conditions, it also exhibits nitric oxide reductase and FAD reductase activities. However, all these reactions are much lower than NOD activity. The sequence is that of Flavohemoprotein A (fhbA) from Dictyostelium discoideum (Social amoeba).